Reading from the N-terminus, the 688-residue chain is T-box transcription factor TBX2-A (688 aa).

Residues 104–277 (LWDQFHKIGT…NNPFAKGFRD (174 aa)) constitute a DNA-binding region (T-box). Disordered regions lie at residues 301–436 (CKAD…GSLS) and 606–688 (PSTN…ETPK). Basic and acidic residues-rich tracts occupy residues 340–361 (NNRE…EIRS), 378–403 (RLED…KDGS), and 412–430 (SLEK…KSDP). The span at 621–636 (PGSESSKPGSSRESSP) shows a compositional bias: low complexity. A coiled-coil region spans residues 655–679 (ASMKDSINELQNIQRLVSGLESQRE). A compositionally biased stretch (basic and acidic residues) spans 676–688 (SQREISPGRETPK).

Binds DNA as a monomer.

Its subcellular location is the nucleus. Its function is as follows. Transcription factor which acts as a transcriptional repressor. May also function as a transcriptional activator. Binds to the palindromic T site 5'-TTCACACCTAGGTGTGAA-3' DNA sequence, or a half-site, which are present in the regulatory region of several genes. This is T-box transcription factor TBX2-A (tbx2-a) from Xenopus laevis (African clawed frog).